The chain runs to 161 residues: Ribonuclease H (161 aa).

One can recognise an RNase H type-1 domain in the interval 12–155 (QPQHVVIYTD…ADALANKGVE (144 aa)). Residues Asp21, Glu59, Asp81, and Asp147 each contribute to the Mg(2+) site.

This sequence belongs to the RNase H family. Monomer. Mg(2+) is required as a cofactor.

Its subcellular location is the cytoplasm. It catalyses the reaction Endonucleolytic cleavage to 5'-phosphomonoester.. In terms of biological role, endonuclease that specifically degrades the RNA of RNA-DNA hybrids. This Polaromonas naphthalenivorans (strain CJ2) protein is Ribonuclease H.